The following is a 254-amino-acid chain: Matrix protein (254 aa).

The protein belongs to the paramyxoviruses M protein family. Interacts with glycoprotein G (via N-terminus), and protein N. Interacts with protein M2-1; this interaction mediates the association between proteins M and N.

The protein resides in the virion. It localises to the host cytoplasm. The protein localises to the host nucleus. Its subcellular location is the host cell membrane. In terms of biological role, has a crucial role in virus assembly and budding. The matrix interacts with the RNP complex and this association serves two functions: facilitate virion assembly and inhibit the viral transcriptase activity. Early in infection, M is localized to the nucleus and may inhibit host cell transcription. Later on, M can associate with lipid rafts supposely by interacting with the cytoskeleton and with the cytoplasmic tail of glycoprotein G. The binding of M to host membrane is stabilized by the surface expression of the viral glycoproteins. These interactions may allow virus formation by mediating association of the nucleocapsid with the nascent envelope. This chain is Matrix protein (M), found in Avian metapneumovirus (isolate Canada goose/Minnesota/15a/2001) (AMPV).